Here is a 389-residue protein sequence, read N- to C-terminus: Chalcone synthase A (389 aa).

The active site involves cysteine 164.

Belongs to the thiolase-like superfamily. Chalcone/stilbene synthases family. In terms of tissue distribution, major expressed member of the gene family in various floral tissues and in seedlings treated with UV light. It is relatively low expressed in tissue culture material.

The catalysed reaction is (E)-4-coumaroyl-CoA + 3 malonyl-CoA + 3 H(+) = 2',4,4',6'-tetrahydroxychalcone + 3 CO2 + 4 CoA. Its pathway is secondary metabolite biosynthesis; flavonoid biosynthesis. The primary product of this enzyme is 4,2',4',6'-tetrahydroxychalcone (also termed naringenin-chalcone or chalcone) which can under specific conditions spontaneously isomerize into naringenin. The protein is Chalcone synthase A (CHSA) of Petunia hybrida (Petunia).